Consider the following 153-residue polypeptide: Endoribonuclease YbeY (153 aa).

Residues His113, His117, and His123 each coordinate Zn(2+).

It belongs to the endoribonuclease YbeY family. It depends on Zn(2+) as a cofactor.

The protein resides in the cytoplasm. In terms of biological role, single strand-specific metallo-endoribonuclease involved in late-stage 70S ribosome quality control and in maturation of the 3' terminus of the 16S rRNA. In Aliivibrio fischeri (strain MJ11) (Vibrio fischeri), this protein is Endoribonuclease YbeY.